The chain runs to 57 residues: Non-structural protein 3a (57 aa).

The first 22 residues, 1-22, serve as a signal peptide directing secretion; the sequence is MIQSPTSFLIVLILLWCKLVLS.

Functionally, involved in resistance to IFN. The protein is Non-structural protein 3a of Avian infectious bronchitis virus (strain Portugal/322/82) (IBV).